Here is a 1177-residue protein sequence, read N- to C-terminus: Lon protease homolog, mitochondrial (1177 aa).

Disordered stretches follow at residues 72-197 and 353-386; these read RTNS…KSPA and AKKAKSGKTEDSKHDSKVTSKDGKETTEKYDSST. Residues 103–150 show a composition bias toward basic and acidic residues; sequence RGRELWVQEKDKSDKPEKSDKPDKTDKTDKDKPEKQDKDKTDKPEKTK. Over residues 154–182 the composition is skewed to low complexity; the sequence is TPSSTASTGAGEAAAPPSAPPSGSGSSSS. The Lon N-terminal domain maps to 203 to 505; sequence ILAVPISDRP…RALILLKREH (303 aa). Basic and acidic residues predominate over residues 353–383; that stretch reads AKKAKSGKTEDSKHDSKVTSKDGKETTEKYD. 657–664 contacts ATP; that stretch reads GPPGVGKT. The segment covering 883–916 has biased composition (basic and acidic residues); sequence EKDKESAEKKTTKSKSKEVNEEPAAKEEKDKATE. Residues 883–932 are disordered; it reads EKDKESAEKKTTKSKSKEVNEEPAAKEEKDKATESAESSETKVGTKAPPV. A Lon proteolytic domain is found at 964-1150; sequence DPPPGVVMGL…QDVYDVVFQG (187 aa). Active-site residues include Ser-1056 and Lys-1099.

The protein belongs to the peptidase S16 family. As to quaternary structure, homohexamer or homoheptamer. Organized in a ring with a central cavity.

The protein resides in the mitochondrion matrix. The enzyme catalyses Hydrolysis of proteins in presence of ATP.. In terms of biological role, ATP-dependent serine protease that mediates the selective degradation of misfolded, unassembled or oxidatively damaged polypeptides as well as certain short-lived regulatory proteins in the mitochondrial matrix. May also have a chaperone function in the assembly of inner membrane protein complexes. Participates in the regulation of mitochondrial gene expression and in the maintenance of the integrity of the mitochondrial genome. Binds to mitochondrial DNA in a site-specific manner. This is Lon protease homolog, mitochondrial from Yarrowia lipolytica (strain CLIB 122 / E 150) (Yeast).